A 466-amino-acid chain; its full sequence is Fumarate hydratase class II (466 aa).

Residues 99–101, 129–132, 139–141, and T187 each bind substrate; these read SGT, HPND, and SSN. Residue H188 is the Proton donor/acceptor of the active site. S318 is a catalytic residue. Substrate-binding positions include S319 and 324–326; that span reads KVN.

Belongs to the class-II fumarase/aspartase family. Fumarase subfamily. In terms of assembly, homotetramer.

The protein resides in the cytoplasm. It catalyses the reaction (S)-malate = fumarate + H2O. The protein operates within carbohydrate metabolism; tricarboxylic acid cycle; (S)-malate from fumarate: step 1/1. Its function is as follows. Involved in the TCA cycle. Catalyzes the stereospecific interconversion of fumarate to L-malate. The polypeptide is Fumarate hydratase class II (Thermus thermophilus (strain ATCC BAA-163 / DSM 7039 / HB27)).